The primary structure comprises 1032 residues: UPF0182 protein sll1060 (1032 aa).

9 helical membrane passes run Trp-27 to Val-49, Trp-69 to Phe-87, Val-144 to Ile-166, Phe-197 to Leu-219, Pro-226 to Leu-248, Trp-283 to Leu-300, His-321 to Leu-339, Leu-364 to Val-386, and Ile-406 to Trp-428.

The protein belongs to the UPF0182 family.

The protein localises to the cell membrane. The sequence is that of UPF0182 protein sll1060 from Synechocystis sp. (strain ATCC 27184 / PCC 6803 / Kazusa).